Consider the following 365-residue polypeptide: Transmembrane protein 25 (365 aa).

A signal peptide spans 1 to 26; sequence MELPLSQATLRHTLLLLPALLSSGQG. Residues 27–232 lie on the Extracellular side of the membrane; it reads ELAPQIDGQT…APGLLATRIE (206 aa). Residues 30–123 enclose the Ig-like domain; the sequence is PQIDGQTWAE…SGRPANASVI (94 aa). Residues Cys-52 and Cys-107 are joined by a disulfide bond. 4 N-linked (GlcNAc...) asparagine glycosylation sites follow: Asn-106, Asn-162, Asn-192, and Asn-205. Residues 233-253 traverse the membrane as a helical segment; that stretch reads VPLLGIVVAGGLALGTLVGFS. The Cytoplasmic segment spans residues 254–365; that stretch reads TLVACLVCRK…SSVSSDEIWL (112 aa).

As to quaternary structure, interacts with GRIN2B. As to expression, expressed throughout the brain with higher levels within the hippocampus.

It is found in the late endosome. The protein resides in the lysosome. The protein localises to the cell membrane. Its subcellular location is the secreted. In terms of biological role, in neurons, modulates the degradation of NMDA receptor GRIN2B subunit. Plays a role in the regulation of neuronal excitability. The chain is Transmembrane protein 25 from Mus musculus (Mouse).